Consider the following 158-residue polypeptide: MMSKLTHIDQTGAANMVDVGAKDETERQAVAEGSVRMNLETLALILEGNAAKGDVIGAARLAGIMAAKKTADLIPLCHPLMLTKVAVEIEPDQTLPGLRVRALAKLKGRTGVEMEALTAVSVTCLTIYDMAKAVDKHMEIGGIRVTEKGGGKSGDWKA.

Substrate is bound by residues 76 to 78 and 114 to 115; these read LCH and ME. D129 is an active-site residue.

The protein belongs to the MoaC family. In terms of assembly, homohexamer; trimer of dimers.

It carries out the reaction (8S)-3',8-cyclo-7,8-dihydroguanosine 5'-triphosphate = cyclic pyranopterin phosphate + diphosphate. It functions in the pathway cofactor biosynthesis; molybdopterin biosynthesis. Catalyzes the conversion of (8S)-3',8-cyclo-7,8-dihydroguanosine 5'-triphosphate to cyclic pyranopterin monophosphate (cPMP). In Brucella anthropi (strain ATCC 49188 / DSM 6882 / CCUG 24695 / JCM 21032 / LMG 3331 / NBRC 15819 / NCTC 12168 / Alc 37) (Ochrobactrum anthropi), this protein is Cyclic pyranopterin monophosphate synthase.